Here is an 88-residue protein sequence, read N- to C-terminus: Exodeoxyribonuclease 7 small subunit (88 aa).

Residues 69-88 (DPMRPDDGEPFDPSIVSTSQ) form a disordered region.

This sequence belongs to the XseB family. Heterooligomer composed of large and small subunits.

The protein localises to the cytoplasm. The enzyme catalyses Exonucleolytic cleavage in either 5'- to 3'- or 3'- to 5'-direction to yield nucleoside 5'-phosphates.. Bidirectionally degrades single-stranded DNA into large acid-insoluble oligonucleotides, which are then degraded further into small acid-soluble oligonucleotides. This is Exodeoxyribonuclease 7 small subunit from Xylella fastidiosa (strain M12).